The primary structure comprises 127 residues: V-type proton ATPase subunit F (127 aa).

Belongs to the V-ATPase F subunit family. As to quaternary structure, V-ATPase is a heteromultimeric enzyme made up of two complexes: the ATP-hydrolytic V1 complex and the proton translocation V0 complex. The V1 complex consists of three catalytic AB heterodimers that form a heterohexamer, three peripheral stalks each consisting of EG heterodimers, one central rotor including subunits D and F, and the regulatory subunits C and H. The proton translocation complex V0 consists of the proton transport subunit a, a ring of proteolipid subunits c9c'', rotary subunit d, subunits e and f, and the accessory subunits VhaAC45 and ATP6AP2.

Its function is as follows. Subunit of the V1 complex of vacuolar(H+)-ATPase (V-ATPase), a multisubunit enzyme composed of a peripheral complex (V1) that hydrolyzes ATP and a membrane integral complex (V0) that translocates protons. V-ATPase is responsible for acidifying and maintaining the pH of intracellular compartments and in some cell types, is targeted to the plasma membrane, where it is responsible for acidifying the extracellular environment. The polypeptide is V-type proton ATPase subunit F (Aedes aegypti (Yellowfever mosquito)).